The following is a 442-amino-acid chain: UBX domain-containing protein 6 (442 aa).

Positions 1 to 10 are mediates interaction with LMAN1; the sequence is MKKFFQEIKA. A disordered region spans residues 13–111; it reads KFKSAGPGQK…TNSVPEPKEE (99 aa). Serine 36 carries the post-translational modification Phosphoserine. The VCP/p97-interacting motif (VIM) stretch occupies residues 51–63; that stretch reads EAQMAAAAALARL. Positions 52 to 61 are enriched in low complexity; sequence AQMAAAAALA. A compositionally biased stretch (polar residues) spans 90 to 105; that stretch reads EATSSNNPGAPGTNSV. Residues 175-244 form the PUB domain; the sequence is VDTIAKYLDN…GQEEFYVLGE (70 aa). The 77-residue stretch at 332–408 folds into the UBX domain; that stretch reads RKYTYALVRV…GLVPSALLTF (77 aa).

As to quaternary structure, interacts with VCP through the PUB domain (via C-terminus) and VIM motif (via N-terminus); the interaction is direct. Forms a ternary complex with CAV1 and VCP. Interacts with SYVN1. Interacts with HERPUD1. Interacts with VCPKMT. May interact with DERL1. Interacts with PLAA, VCP and YOD1; may form a complex involved in macroautophagy. Interacts with LMAN1. As to expression, widely expressed (at protein level). Highest expression in brain (at protein level).

The protein resides in the cytoplasm. Its subcellular location is the cytosol. It localises to the membrane. The protein localises to the nucleus. It is found in the cytoskeleton. The protein resides in the microtubule organizing center. Its subcellular location is the centrosome. It localises to the early endosome membrane. The protein localises to the late endosome membrane. It is found in the lysosome membrane. May negatively regulate the ATPase activity of VCP, an ATP-driven segregase that associates with different cofactors to control a wide variety of cellular processes. As a cofactor of VCP, it may play a role in the transport of CAV1 to lysosomes for degradation. It may also play a role in endoplasmic reticulum-associated degradation (ERAD) of misfolded proteins. Together with VCP and other cofactors, it may play a role in macroautophagy, regulating for instance the clearance of damaged lysosomes. The chain is UBX domain-containing protein 6 from Mus musculus (Mouse).